A 438-amino-acid polypeptide reads, in one-letter code: Nudix hydrolase 19, chloroplastic (438 aa).

A chloroplast-targeting transit peptide spans 1 to 36; the sequence is MLALFLSSSSYPTLSFLSRSVTLNLARTTTLSALTM. Residues Cys212, Cys215, Cys230, and Cys235 each contribute to the Zn(2+) site. Residues Tyr240, 276–278, Glu292, Glu296, and Glu342 each bind substrate; that span reads AGF. A Nudix hydrolase domain is found at 241–371; sequence PRVDPVVIML…EYRKAQRTAA (131 aa). Ala276, Glu292, Glu296, and Glu342 together coordinate Mg(2+). The Nudix box motif lies at 277–298; it reads GFIEPGESLEEAVRRETWEETG. Residues 422–424 carry the Microbody targeting signal motif; it reads PDD.

It belongs to the Nudix hydrolase family. NudC subfamily. Mg(2+) is required as a cofactor. The cofactor is Zn(2+). Expressed in roots, leaves, stems and inflorescences.

The protein resides in the plastid. Its subcellular location is the chloroplast. The enzyme catalyses a 5'-end NAD(+)-phospho-ribonucleoside in mRNA + H2O = a 5'-end phospho-adenosine-phospho-ribonucleoside in mRNA + beta-nicotinamide D-ribonucleotide + 2 H(+). The catalysed reaction is NAD(+) + H2O = beta-nicotinamide D-ribonucleotide + AMP + 2 H(+). It catalyses the reaction NADH + H2O = reduced beta-nicotinamide D-ribonucleotide + AMP + 2 H(+). MRNA decapping enzyme that specifically removes the nicotinamide adenine dinucleotide (NAD) cap from a subset of mRNAs by hydrolyzing the diphosphate linkage to produce nicotinamide mononucleotide (NMN) and 5' monophosphate mRNA. The NAD-cap is present at the 5'-end of some RNAs; in contrast to the canonical N7 methylguanosine (m7G) cap, the NAD cap promotes mRNA decay. Mediates the hydrolysis of some nucleoside diphosphate derivatives. Has a high affinity for NADPH compared with that for NADH. This is Nudix hydrolase 19, chloroplastic (NUDT19) from Arabidopsis thaliana (Mouse-ear cress).